Here is a 243-residue protein sequence, read N- to C-terminus: NAD(P)H-quinone oxidoreductase subunit K (243 aa).

[4Fe-4S] cluster contacts are provided by C59, C60, C124, and C155.

It belongs to the complex I 20 kDa subunit family. As to quaternary structure, NDH-1 can be composed of about 15 different subunits; different subcomplexes with different compositions have been identified which probably have different functions. [4Fe-4S] cluster is required as a cofactor.

It is found in the cellular thylakoid membrane. It carries out the reaction a plastoquinone + NADH + (n+1) H(+)(in) = a plastoquinol + NAD(+) + n H(+)(out). The enzyme catalyses a plastoquinone + NADPH + (n+1) H(+)(in) = a plastoquinol + NADP(+) + n H(+)(out). Its function is as follows. NDH-1 shuttles electrons from an unknown electron donor, via FMN and iron-sulfur (Fe-S) centers, to quinones in the respiratory and/or the photosynthetic chain. The immediate electron acceptor for the enzyme in this species is believed to be plastoquinone. Couples the redox reaction to proton translocation, and thus conserves the redox energy in a proton gradient. Cyanobacterial NDH-1 also plays a role in inorganic carbon-concentration. The polypeptide is NAD(P)H-quinone oxidoreductase subunit K (Picosynechococcus sp. (strain ATCC 27264 / PCC 7002 / PR-6) (Agmenellum quadruplicatum)).